Reading from the N-terminus, the 381-residue chain is Opsin Rh2 (381 aa).

The Extracellular portion of the chain corresponds to 1 to 56; the sequence is MERSLLPEPPLAMALLGPRFEAQTGGNRSVLDNVLPDMAPLVNPYWSRFAPMDPTM. An N-linked (GlcNAc...) asparagine glycan is attached at asparagine 27. A helical transmembrane segment spans residues 57–81; that stretch reads SKILGLFTLVILIISCCGNGVVVYI. Over 82–93 the chain is Cytoplasmic; the sequence is FGGTKSLRTPAN. A helical membrane pass occupies residues 94–119; that stretch reads LLVLNLAFSDFCMMASQSPVMIINFY. Over 120–133 the chain is Extracellular; sequence YETWVLGPLWCDIY. Cysteine 130 and cysteine 207 are oxidised to a cystine. A helical membrane pass occupies residues 134–153; the sequence is AACGSLFGCVSIWSMCMIAF. Over 154-172 the chain is Cytoplasmic; the sequence is DRYNVIVKGINGTPMTIKT. The helical transmembrane segment at 173 to 196 threads the bilayer; sequence SIMKIAFIWMMAVFWTIMPLIGWS. Topologically, residues 197 to 220 are extracellular; that stretch reads SYVPEGNLTACSIDYMTRQWNPRS. The chain crosses the membrane as a helical span at residues 221-248; it reads YLITYSLFVYYTPLFMICYSYWFIIATV. Residues 249–283 are Cytoplasmic-facing; the sequence is AAHEKAMRDQAKKMNVKSLRSSEDCDKSAENKLAK. Residues 284–307 form a helical membrane-spanning segment; that stretch reads VALTTISLWFMAWTPYLIICYFGL. The Extracellular portion of the chain corresponds to 308–314; sequence FKIDGLT. Residues 315–339 form a helical membrane-spanning segment; it reads PLTTIWGATFAKTSAVYNPIVYGIS. At lysine 326 the chain carries N6-(retinylidene)lysine. The Cytoplasmic segment spans residues 340–381; the sequence is HPKYRLVLKEKCPMCVCGSTDEPKPDAPPSDTETTSEAESKA. The disordered stretch occupies residues 358 to 381; sequence STDEPKPDAPPSDTETTSEAESKA. The span at 370–381 shows a compositional bias: polar residues; the sequence is DTETTSEAESKA.

The protein belongs to the G-protein coupled receptor 1 family. Opsin subfamily. Post-translationally, some or all of the Ser/Thr residues present in the C-terminal part may be phosphorylated.

The protein localises to the membrane. Functionally, visual pigments are the light-absorbing molecules that mediate vision. They consist of an apoprotein, opsin, covalently linked to cis-retinal. This is Opsin Rh2 (Rh2) from Drosophila pseudoobscura pseudoobscura (Fruit fly).